A 273-amino-acid polypeptide reads, in one-letter code: 3-methyl-2-oxobutanoate hydroxymethyltransferase (273 aa).

Residues D53 and D92 each contribute to the Mg(2+) site. 3-methyl-2-oxobutanoate contacts are provided by residues 53–54 (DS), D92, and K120. Residue E122 participates in Mg(2+) binding. Residue E189 is the Proton acceptor of the active site.

Belongs to the PanB family. In terms of assembly, homodecamer; pentamer of dimers. Requires Mg(2+) as cofactor.

It localises to the cytoplasm. The catalysed reaction is 3-methyl-2-oxobutanoate + (6R)-5,10-methylene-5,6,7,8-tetrahydrofolate + H2O = 2-dehydropantoate + (6S)-5,6,7,8-tetrahydrofolate. The protein operates within cofactor biosynthesis; (R)-pantothenate biosynthesis; (R)-pantoate from 3-methyl-2-oxobutanoate: step 1/2. Its function is as follows. Catalyzes the reversible reaction in which hydroxymethyl group from 5,10-methylenetetrahydrofolate is transferred onto alpha-ketoisovalerate to form ketopantoate. The sequence is that of 3-methyl-2-oxobutanoate hydroxymethyltransferase from Cupriavidus necator (strain ATCC 17699 / DSM 428 / KCTC 22496 / NCIMB 10442 / H16 / Stanier 337) (Ralstonia eutropha).